The sequence spans 152 residues: MAKRVQVVLNETVNKLGRMGQVVEVAPGYARNYLFPRGIAEPATPSALRRVERLQEKERQRLAALKSIAEKQKATLEKLATITISMPVGEKDMLFGSVTPQDVADAIQAITGETIDRREMILPEIRKLGTYTAEIKLHPEVTVKLNIQVVAD.

The protein belongs to the bacterial ribosomal protein bL9 family.

Its function is as follows. Binds to the 23S rRNA. In Thermosynechococcus vestitus (strain NIES-2133 / IAM M-273 / BP-1), this protein is Large ribosomal subunit protein bL9.